The primary structure comprises 431 residues: Nuclear envelope integral membrane protein 1 (431 aa).

The signal sequence occupies residues 1–29; the sequence is MAGEVEGEGCRVSWGVLVALLLLPLPSLC. The next 5 membrane-spanning stretches (helical) occupy residues 151-171, 175-195, 206-226, 236-256, and 266-286; these read PRLFFVFLCGLLLFFYGDTLS, IFYYSTGITVGMLASMLILVF, PFVALLLGGWSVSIYVIQLVF, YWQYLLGYLGIVGFVSFAFCY, and SINILNWTLQLIGLLLMYISV. Positions 176–287 are a; required for its colocalization with lamins at the nuclear envelope; the sequence is FYYSTGITVG…GLLLMYISVQ (112 aa). The Nuclear localization signal signature appears at 317 to 325; the sequence is RKIKLKRGK. The b; required for interaction with ran stretch occupies residues 326 to 395; it reads PSPPRLLTEE…LTPNEVSVHE (70 aa). The interval 326-431 is interaction with banf1-a and banf1-b; it reads PSPPRLLTEE…IEPVLYQDLR (106 aa). The tract at residues 368–375 is BAF-binding site (BBS); essential for interaction with banf1-a, banf1-b and ran; it reads SRIQSPKR.

The protein belongs to the NEMP family. In terms of assembly, homooligomer. Interacts with banf1-a and banf1-b. Interacts with ran-gtp. Post-translationally, phosphorylated.

The protein localises to the nucleus inner membrane. It is found in the nucleus envelope. In concert with ran, required for proper eye development. May be involved in the expression of early eye marker genes. Contributes to nuclear envelope stiffness in germ cells. Required for fertility. Essential for normal erythropoiesis. Required for efficient nuclear envelope opening and enucleation during the late stages of erythroblast maturation. The protein is Nuclear envelope integral membrane protein 1 (nemp1) of Xenopus tropicalis (Western clawed frog).